Reading from the N-terminus, the 264-residue chain is Claudin-18 (264 aa).

The Cytoplasmic portion of the chain corresponds to 1–6 (MATTTC). Residues 7–27 (QVVGLLLSLLGLAGCIAATGM) form a helical membrane-spanning segment. At 28–80 (DMWSTQDLYDNPVTAVFQYEGLWRSCVQQSSGFTECRPYFTILGLPAMLQAVR) the chain is on the extracellular side. Residues 81-101 (ALMIVGIVLGVIGILVSIFAL) traverse the membrane as a helical segment. Topologically, residues 102-122 (KCIRIGSMDDSAKAKMTLTSG) are cytoplasmic. Residues 123–143 (ILFIISGICAIIGVSVFANML) traverse the membrane as a helical segment. Residues 144 to 176 (VTNFWMSTANMYSGMGGMGGMVQTVQTRYTFGA) are Extracellular-facing. Residues 177-197 (ALFVGWVAGGLTLIGGVMMCI) form a helical membrane-spanning segment. Residues 198 to 264 (ACRGLTPDDS…QSHPTKYDYV (67 aa)) are Cytoplasmic-facing. The tract at residues 198–264 (ACRGLTPDDS…QSHPTKYDYV (67 aa)) is required for role in regulation of RANKL-induced osteoclast differentiation. Residue Ser-217 is modified to Phosphoserine. The segment at 241–264 (KKIYDGGARTEDDEQSHPTKYDYV) is disordered. Positions 242–264 (KIYDGGARTEDDEQSHPTKYDYV) are enriched in basic and acidic residues.

This sequence belongs to the claudin family. In terms of assembly, interacts with TJP2/ZO-2. Interacts with TJP1/ZO-1. Interacts with YAP1 (phosphorylated); the interaction sequesters YAP1 away from the nucleus and thereby restricts transcription of YAP1 target genes. Interacts with CLDN19. In terms of tissue distribution, expressed in the lung (at protein level). Expressed in lung. Expressed in the stomach. As to expression, expressed in lung. In terms of tissue distribution, expressed in stomach. Expressed in bone. Expressed in stomach.

It is found in the cell junction. Its subcellular location is the tight junction. The protein resides in the cell membrane. It localises to the lateral cell membrane. Involved in alveolar fluid homeostasis via regulation of alveolar epithelial tight junction composition and therefore ion transport and solute permeability, potentially via downstream regulation of the actin cytoskeleton organization and beta-2-adrenergic signaling. Required for lung alveolarization and maintenance of the paracellular alveolar epithelial barrier. Acts to maintain epithelial progenitor cell proliferation and organ size, via regulation of YAP1 localization away from the nucleus and thereby restriction of YAP1 target gene transcription. Acts as a negative regulator of RANKL-induced osteoclast differentiation, potentially via relocation of TJP2/ZO-2 away from the nucleus, subsequently involved in bone resorption in response to calcium deficiency. Mediates the osteoprotective effects of estrogen, potentially via acting downstream of estrogen signaling independently of RANKL signaling pathways. Its function is as follows. Involved in the maintenance of homeostasis of the alveolar microenvironment via regulation of pH and subsequent T-cell activation in the alveolar space, is therefore indirectly involved in limiting C.neoformans infection. In terms of biological role, required for the formation of the gastric paracellular barrier via its role in tight junction formation, thereby involved in the response to gastric acidification. This is Claudin-18 (Cldn18) from Mus musculus (Mouse).